Reading from the N-terminus, the 1112-residue chain is Electrogenic sodium bicarbonate cotransporter 4 (1112 aa).

The span at 1 to 13 (MKVEEKAGVKKLE) shows a compositional bias: basic and acidic residues. 3 disordered regions span residues 1-80 (MKVE…SSLG), 220-255 (KKPIHRSLADIGKSVSTTNRSSARSPSAGPTLHHST), and 439-469 (GRSGASAGGGGSGGGAGGSGAGGGGSGNEAE). The Cytoplasmic portion of the chain corresponds to 1 to 513 (MKVEEKAGVK…DFYDGFHIQS (513 aa)). Polar residues-rich tracts occupy residues 53–67 (QRVQWSLQPDKSQQD) and 233–244 (SVSTTNRSSARS). Over residues 444–465 (SAGGGGSGGGAGGSGAGGGGSG) the composition is skewed to gly residues. A helical transmembrane segment spans residues 514–536 (ISAVLFIYLGCITNAITFGGLLG). Over 537–547 (DATDNYQGVME) the chain is Extracellular. The chain crosses the membrane as a helical span at residues 548-579 (SFLGTAMAGSLFCLFSGQPLIILSSTGPILIF). Topologically, residues 580–598 (EKLLFDFSKANGLDYMEFR) are cytoplasmic. A helical membrane pass occupies residues 599–620 (LWIGLHSAIQCLILVATDASFI). The Extracellular segment spans residues 621-734 (IKYITRFTEE…LGSSCQFVPD (114 aa)). Residues 735–753 (LALMSFILFFGTYSMTLTL) form a helical membrane-spanning segment. Residues 754-772 (KKFKFSRYFPTKVRTLVAD) are Cytoplasmic-facing. A helical membrane pass occupies residues 773-792 (FSIVFSILLFCGIDACFGLQ). The Extracellular segment spans residues 793–820 (TPKLHVPNVIKPTRPDRGWFVAPFGKNP). Residues 821 to 839 (WWVYPASILPALLVTILIF) traverse the membrane as a helical segment. At 840-858 (MDQQITAVIVNRKENKLRK) the chain is on the cytoplasmic side. The chain crosses the membrane as a helical span at residues 859–875 (AAGYHLDLFWVGILMAL). Residues 876 to 880 (CSFMG) lie on the Extracellular side of the membrane. Residues 881 to 900 (LPWYVAATVISIAHIDSLKM) form a helical membrane-spanning segment. Over 901–920 (ETETSAPGEQPQFLGVREQR) the chain is Cytoplasmic. Residues 921 to 940 (VTGVMVFILTGISVFLAPIL) traverse the membrane as a helical segment. Topologically, residues 941–945 (KYIPM) are extracellular. The helical transmembrane segment at 946 to 966 (PVLYGVFLYMGVASLNGIQFW) threads the bilayer. Over 967–992 (DRCKLFLMPAKHQPDHAFLRHVPLRR) the chain is Cytoplasmic. Residues 993 to 1010 (IHLFTLVQILCLALLWIL) traverse the membrane as a helical segment. The Extracellular portion of the chain corresponds to 1011–1015 (KSTMA). A helical membrane pass occupies residues 1016 to 1033 (AIIFPVMILGLIIVRRLL). Residues 1034 to 1112 (DLIFSQHDLA…KRSSSWSHSL (79 aa)) are Cytoplasmic-facing. A compositionally biased stretch (basic and acidic residues) spans 1055 to 1074 (KESDRKKRRKEVHENTDKEP). Residues 1055-1112 (KESDRKKRRKEVHENTDKEPQFLPPSVVKIPMEGIPSDPQNGIHCVGRKRSSSWSHSL) are disordered.

The protein belongs to the anion exchanger (TC 2.A.31) family. Observed in hepatocytes and in the apical region of bile duct intrahepatic cholangiocytes of liver. Also observed in uroepithelium cells lining the outer pelvic wall of the kidney (at protein level). Highly expressed in colon, distal colon, liver, kidney and testis. Moderate expression in duodenum and stomach and weak expression in heart. In kidney, very weakly expressed in the inner medulla, but abundantly expressed in cortex and outer medulla in the medullary thick ascending and cortical thick ascending limbs of the loop of Henle.

It is found in the basolateral cell membrane. The protein localises to the apical cell membrane. The enzyme catalyses 2 hydrogencarbonate(out) + Na(+)(out) = 2 hydrogencarbonate(in) + Na(+)(in). It catalyses the reaction 3 hydrogencarbonate(out) + Na(+)(out) = 3 hydrogencarbonate(in) + Na(+)(in). In terms of biological role, mediates sodium- and bicarbonate-dependent electrogenic sodium bicarbonate cotransport, with a Na(+):HCO3(-) stoichiometry varying from 1:2 to 1:3. The polypeptide is Electrogenic sodium bicarbonate cotransporter 4 (Rattus norvegicus (Rat)).